A 289-amino-acid polypeptide reads, in one-letter code: Melatonin receptor type 1B (289 aa).

At 1–2 (GN) the chain is on the cytoplasmic side. A helical transmembrane segment spans residues 3–23 (AFVVSLALADLVVALYPYPLV). The Extracellular segment spans residues 24–41 (LLAIFHNGWTLGEMHCKV). C39 and C116 are oxidised to a cystine. A helical transmembrane segment spans residues 42-62 (SGFVMGLSVIGSIFNITAIAI). Topologically, residues 63-81 (NRYCYICHSFAYDKVYSCW) are cytoplasmic. The helical transmembrane segment at 82–102 (NTMLYVSLIWVLTVIATVPNF) threads the bilayer. Over 103-126 (FVGSLKYDPRIYSCTFVQTASSYY) the chain is Extracellular. The helical transmembrane segment at 127-147 (TIAVVVIHFIVPITVVSFCYL) threads the bilayer. Residues 148–179 (RIWVLVLQVRRRVKSETKPRLKPSDFRNFLTM) lie on the Cytoplasmic side of the membrane. The helical transmembrane segment at 180–200 (FVVFVIFAFCWAPLNFIGLAV) threads the bilayer. Topologically, residues 201–213 (AINPSEMAPKVPE) are extracellular. A helical transmembrane segment spans residues 214–234 (WLFIISYFMAYFNSCLNAIIY). The Cytoplasmic portion of the chain corresponds to 235 to 289 (GLLNQNFRNEYKRILMSLWMPRLFFQDTSKGGTDGQKSKPSPALNNNDQMKTDTL). Residues 264–289 (KGGTDGQKSKPSPALNNNDQMKTDTL) are disordered.

The protein belongs to the G-protein coupled receptor 1 family. As to expression, brain and kidney, with trace levels in lungs.

The protein localises to the cell membrane. Functionally, high affinity receptor for melatonin. The activity of this receptor is mediated by pertussis toxin sensitive G proteins that inhibits adenylate cyclase activity. In Gallus gallus (Chicken), this protein is Melatonin receptor type 1B.